We begin with the raw amino-acid sequence, 505 residues long: Maturase K (505 aa).

Belongs to the intron maturase 2 family. MatK subfamily.

It localises to the plastid. Its subcellular location is the chloroplast. Usually encoded in the trnK tRNA gene intron. Probably assists in splicing its own and other chloroplast group II introns. The sequence is that of Maturase K from Physcomitrium patens (Spreading-leaved earth moss).